The following is a 489-amino-acid chain: L-asparagine permease 1 (489 aa).

The next 12 membrane-spanning stretches (helical) occupy residues 25–45 (QLQM…GAGG), 49–69 (KAGP…FLIL), 100–120 (AVGW…TTAI), 137–157 (ILAL…VEWF), 162–182 (FWAA…GTVF), 210–230 (WLPL…VELV), 255–275 (IAIF…YTAY), 289–309 (IGFH…ALSS), 344–364 (YGGI…NAFK), 369–389 (FEIV…TIVL), 413–433 (SPYS…TMAS), and 439–459 (TWTV…WYLV).

The protein belongs to the amino acid-polyamine-organocation (APC) superfamily. Amino acid transporter (AAT) (TC 2.A.3.1) family.

It is found in the cell membrane. This is L-asparagine permease 1 (ansP1) from Mycobacterium tuberculosis (strain CDC 1551 / Oshkosh).